The following is a 247-amino-acid chain: MNEKIAILSAYSFVNIEEPANLIPKLLLIGKRKYVRGTILLANEGFNGSFSGSYENVNLVLEELIKLTGPKDVNVKINYSDVHPFQKLKVRLKKEIVAMNVDDLNVDLFKGEYIEPKDWDEFITKQDVIVIDTRNDYEVEVGTFKSAINPNTKTFKQFPAWVQQNQELLKGKKIAMVCTGGIRCEKSTSLLKSIGYDEVYHLKGGILQYLEDTQNKNNLWQGECFVFDDRRAVTDDLSPVERHWLQR.

The 95-residue stretch at 124–218 folds into the Rhodanese domain; it reads TKQDVIVIDT…YLEDTQNKNN (95 aa). Residue Cys-178 is the Cysteine persulfide intermediate of the active site.

Belongs to the TrhO family.

The catalysed reaction is uridine(34) in tRNA + AH2 + O2 = 5-hydroxyuridine(34) in tRNA + A + H2O. Functionally, catalyzes oxygen-dependent 5-hydroxyuridine (ho5U) modification at position 34 in tRNAs. The protein is tRNA uridine(34) hydroxylase of Rickettsia massiliae (strain Mtu5).